Here is a 564-residue protein sequence, read N- to C-terminus: Ribulokinase (564 aa).

This sequence belongs to the ribulokinase family.

It catalyses the reaction D-ribulose + ATP = D-ribulose 5-phosphate + ADP + H(+). The catalysed reaction is L-ribulose + ATP = L-ribulose 5-phosphate + ADP + H(+). It functions in the pathway carbohydrate degradation; L-arabinose degradation via L-ribulose; D-xylulose 5-phosphate from L-arabinose (bacterial route): step 2/3. The sequence is that of Ribulokinase from Geobacillus thermodenitrificans (strain NG80-2).